A 107-amino-acid chain; its full sequence is UPF0145 protein BVU_2335 (107 aa).

The protein belongs to the UPF0145 family.

The protein is UPF0145 protein BVU_2335 of Phocaeicola vulgatus (strain ATCC 8482 / DSM 1447 / JCM 5826 / CCUG 4940 / NBRC 14291 / NCTC 11154) (Bacteroides vulgatus).